The chain runs to 75 residues: MKADIHPVYEAIDATCSCGNVIKTRSTLTGPLSLDVCNECHPFYTGKQKTLDIGGRVDKFKSRFGAFGATKAKQD.

Residues C16, C18, C37, and C40 each contribute to the Zn(2+) site.

This sequence belongs to the bacterial ribosomal protein bL31 family. Type A subfamily. In terms of assembly, part of the 50S ribosomal subunit. It depends on Zn(2+) as a cofactor.

Its function is as follows. Binds the 23S rRNA. This chain is Large ribosomal subunit protein bL31, found in Pseudomonas syringae pv. tomato (strain ATCC BAA-871 / DC3000).